The following is a 363-amino-acid chain: Pyrimidine monooxygenase RutA (363 aa).

FMN is bound by residues 49 to 50 (IK), Asn-115, Glu-124, 140 to 141 (RY), and Ser-190.

It belongs to the NtaA/SnaA/DszA monooxygenase family. RutA subfamily.

The enzyme catalyses uracil + FMNH2 + NADH + O2 = (Z)-3-ureidoacrylate + FMN + NAD(+) + H2O + H(+). It carries out the reaction thymine + FMNH2 + NADH + O2 = (Z)-2-methylureidoacrylate + FMN + NAD(+) + H2O + H(+). In terms of biological role, catalyzes the pyrimidine ring opening between N-3 and C-4 by an unusual flavin hydroperoxide-catalyzed mechanism, adding oxygen atoms in the process to yield ureidoacrylate peracid, that immediately reacts with FMN forming ureidoacrylate and FMN-N(5)-oxide. The FMN-N(5)-oxide reacts spontaneously with NADH to produce FMN. Requires the flavin reductase RutF to regenerate FMN in vivo. The sequence is that of Pyrimidine monooxygenase RutA from Klebsiella pneumoniae (strain 342).